A 354-amino-acid polypeptide reads, in one-letter code: Neuronal growth regulator 1 (354 aa).

A signal peptide spans 1–37; sequence MDMMLLVQGACCSNQWLAAVLLSLCCLLPSCLPAGQS. 3 consecutive Ig-like C2-type domains span residues 38-134, 139-221, and 225-313; these read VDFP…VHLT, PKIY…KVVV, and PTIQ…LPLN. Cys-60 and Cys-118 form a disulfide bridge. N-linked (GlcNAc...) asparagine glycans are attached at residues Asn-73 and Asn-155. 2 disulfide bridges follow: Cys-160-Cys-203 and Cys-245-Cys-297. Phosphotyrosine is present on Tyr-187. N-linked (GlcNAc...) asparagine glycans are attached at residues Asn-275, Asn-286, Asn-294, and Asn-307. A lipid anchor (GPI-anchor amidated glycine) is attached at Gly-324. The propeptide at 325-354 is removed in mature form; that stretch reads SADVLFSCWYLVLTLSSFTSIFYLKNAILQ.

The protein belongs to the immunoglobulin superfamily. IgLON family.

It localises to the cell membrane. In terms of biological role, may be involved in cell-adhesion. May function as a trans-neural growth-promoting factor in regenerative axon sprouting in the mammalian brain. This is Neuronal growth regulator 1 (NEGR1) from Homo sapiens (Human).